A 194-amino-acid chain; its full sequence is Large ribosomal subunit protein eL15 (194 aa).

Residues 164–194 form a disordered region; sequence SAGKKGRGLRNKGKGAEKIRPSIRANEGKGK. Positions 167 to 176 are enriched in basic residues; it reads KKGRGLRNKG. Residues 177 to 194 are compositionally biased toward basic and acidic residues; it reads KGAEKIRPSIRANEGKGK.

This sequence belongs to the eukaryotic ribosomal protein eL15 family.

The protein is Large ribosomal subunit protein eL15 (rpl15e) of Pyrococcus abyssi (strain GE5 / Orsay).